A 664-amino-acid polypeptide reads, in one-letter code: MMTKQALLEVHNLVREFPAGDSTVQILKNINLTIYEGELVAIVGQSGSGKSTLMNILGCLDRPTSGSYKVSGQETGKLEPDDLAKLRREYFGFIFQRYHLLGDLSAEGNVEVPAVYAGVTPAERKQRATALLTELGLGSKTENRPSQLSGGQQQRVSIARALMNGGDVILADEPTGALDSHSGVEVMRILRELNAAGHTVIIVTHDMQVAKNATRIIEISDGKIIADRENIPEYASELNKDPDAAPAIANKQSKGKSVSAFRSMLDRLSEAFQMALISMNAHRMRTFLTMLGIIIGIASVVTVVALGNGSQKQILENISSLGTNTITVFQGRGFGDNSKTANFKTLVPSDADALSSQPYVTAVSPMVSSSKTIRYKENEATATINGVSNDYFDVKGLTFKDGQSFDQRSVRDLTQDVVIDTNTQKQFFTDGSNPIGQVVLLGSVPARIIGIVEPQTSSMGSDDSLNVYMPYTTVMSRMLGQSNVRNIIVRINDQYSTSAAENAIVNLLTLRHGQQDIFTMNSDSIRQTIEKTTSTMTLLVSAIAVISLIVGGIGVMNIMLVSVTERTQEIGVRMAVGARQSDILQQFLIEAILVCLIGGVLGVLLSLGLGQLINKVAAGNFAVAYSTTSIVAAFVCSTLIGVVFGFLPARNAAQLDPVAALSRE.

One can recognise an ABC transporter domain in the interval Leu-8–Pro-246. Gly-44–Ser-51 lines the ATP pocket. Transmembrane regions (helical) follow at residues Phe-287–Gly-307, Ile-543–Val-563, Phe-587–Leu-607, and Ser-629–Ala-649.

It belongs to the ABC transporter superfamily. Macrolide exporter (TC 3.A.1.122) family. In terms of assembly, homodimer. Part of the tripartite efflux system MacAB-TolC, which is composed of an inner membrane transporter, MacB, a periplasmic membrane fusion protein, MacA, and an outer membrane component, TolC. The complex forms a large protein conduit and can translocate molecules across both the inner and outer membranes. Interacts with MacA.

The protein resides in the cell inner membrane. Functionally, part of the tripartite efflux system MacAB-TolC. MacB is a non-canonical ABC transporter that contains transmembrane domains (TMD), which form a pore in the inner membrane, and an ATP-binding domain (NBD), which is responsible for energy generation. Confers resistance against macrolides. This Acinetobacter baylyi (strain ATCC 33305 / BD413 / ADP1) protein is Macrolide export ATP-binding/permease protein MacB.